The sequence spans 429 residues: Glutamate-1-semialdehyde 2,1-aminomutase 1 (429 aa).

Lysine 268 bears the N6-(pyridoxal phosphate)lysine mark.

The protein belongs to the class-III pyridoxal-phosphate-dependent aminotransferase family. HemL subfamily. As to quaternary structure, homodimer. The cofactor is pyridoxal 5'-phosphate.

Its subcellular location is the cytoplasm. The enzyme catalyses (S)-4-amino-5-oxopentanoate = 5-aminolevulinate. The protein operates within porphyrin-containing compound metabolism; protoporphyrin-IX biosynthesis; 5-aminolevulinate from L-glutamyl-tRNA(Glu): step 2/2. This is Glutamate-1-semialdehyde 2,1-aminomutase 1 from Listeria monocytogenes serotype 4b (strain F2365).